The sequence spans 395 residues: Na(+)/H(+) antiporter NhaA (395 aa).

The next 11 helical transmembrane spans lie at 11–31, 61–81, 96–116, 127–147, 156–176, 179–199, 202–222, 264–284, 295–315, 331–351, and 366–386; these read FAME…ALII, LLLW…GLEV, IVLP…IYWF, GWAI…ALLG, LFLM…IAIF, GTLS…LVAM, MGVV…VCVL, FGIL…GVTL, IAVG…WMAV, VLGV…VGSL, and MGIL…TAAA.

Belongs to the NhaA Na(+)/H(+) (TC 2.A.33) antiporter family.

It localises to the cell inner membrane. It catalyses the reaction Na(+)(in) + 2 H(+)(out) = Na(+)(out) + 2 H(+)(in). Functionally, na(+)/H(+) antiporter that extrudes sodium in exchange for external protons. The chain is Na(+)/H(+) antiporter NhaA from Pseudomonas fluorescens (strain ATCC BAA-477 / NRRL B-23932 / Pf-5).